The sequence spans 88 residues: Large ribosomal subunit protein bL27 (88 aa).

The segment at 1-21 is disordered; the sequence is MAHKKGASSSRNGRDSAAQRL.

The protein belongs to the bacterial ribosomal protein bL27 family.

The chain is Large ribosomal subunit protein bL27 from Mycobacterium marinum (strain ATCC BAA-535 / M).